A 191-amino-acid chain; its full sequence is Outer membrane lipoprotein DolP (191 aa).

Residues 1–18 (MKALSPIAVLISALLLQG) form the signal peptide. Cysteine 19 carries N-palmitoyl cysteine lipidation. Residue cysteine 19 is the site of S-diacylglycerol cysteine attachment. BON domains follow at residues 46–115 (DDGT…RQGQ) and 124–191 (NDTW…TFIK).

This sequence belongs to the lipoprotein DolP family.

The protein localises to the cell outer membrane. Its function is as follows. Plays an important role in maintaining outer membrane integrity. The polypeptide is Outer membrane lipoprotein DolP (Escherichia coli O157:H7).